The sequence spans 445 residues: Tubby-like F-box protein 14 (445 aa).

In terms of domain architecture, F-box spans 56-114 (SSCWANLPPELLRDVIERLEASEAAWPSRKNVVACAAVCRTWRDMCREIVKNPEFCGKI).

It belongs to the TUB family. As to expression, ubiquitous.

The protein is Tubby-like F-box protein 14 (TULP14) of Oryza sativa subsp. japonica (Rice).